A 233-amino-acid chain; its full sequence is Large ribosomal subunit protein uL1 (233 aa).

This sequence belongs to the universal ribosomal protein uL1 family. As to quaternary structure, part of the 50S ribosomal subunit.

Binds directly to 23S rRNA. The L1 stalk is quite mobile in the ribosome, and is involved in E site tRNA release. In terms of biological role, protein L1 is also a translational repressor protein, it controls the translation of the L11 operon by binding to its mRNA. The sequence is that of Large ribosomal subunit protein uL1 from Deinococcus deserti (strain DSM 17065 / CIP 109153 / LMG 22923 / VCD115).